Consider the following 103-residue polypeptide: Small ribosomal subunit protein uS14c (103 aa).

The tract at residues 34 to 56 (KVSPLSLSEKTKMREKLQSLPRN) is disordered.

This sequence belongs to the universal ribosomal protein uS14 family. Part of the 30S ribosomal subunit.

Its subcellular location is the plastid. It localises to the chloroplast. Binds 16S rRNA, required for the assembly of 30S particles. The chain is Small ribosomal subunit protein uS14c from Brachypodium distachyon (Purple false brome).